A 246-amino-acid polypeptide reads, in one-letter code: Adenosylcobinamide-GDP ribazoletransferase (246 aa).

The next 6 membrane-spanning stretches (helical) occupy residues 37-57 (FPAV…AGAL), 64-84 (ALAA…DGLA), 100-122 (LLAV…LQLL), 139-159 (ALVL…WWLM), 185-205 (LAAA…VLWW), and 223-243 (AGIE…GLWI).

The protein belongs to the CobS family. Mg(2+) serves as cofactor.

It is found in the cell inner membrane. It catalyses the reaction alpha-ribazole + adenosylcob(III)inamide-GDP = adenosylcob(III)alamin + GMP + H(+). The catalysed reaction is alpha-ribazole 5'-phosphate + adenosylcob(III)inamide-GDP = adenosylcob(III)alamin 5'-phosphate + GMP + H(+). The protein operates within cofactor biosynthesis; adenosylcobalamin biosynthesis; adenosylcobalamin from cob(II)yrinate a,c-diamide: step 7/7. Its function is as follows. Joins adenosylcobinamide-GDP and alpha-ribazole to generate adenosylcobalamin (Ado-cobalamin). Also synthesizes adenosylcobalamin 5'-phosphate from adenosylcobinamide-GDP and alpha-ribazole 5'-phosphate. The polypeptide is Adenosylcobinamide-GDP ribazoletransferase (Novosphingobium aromaticivorans (strain ATCC 700278 / DSM 12444 / CCUG 56034 / CIP 105152 / NBRC 16084 / F199)).